Reading from the N-terminus, the 503-residue chain is Glycerol kinase (503 aa).

Thr14 is an ADP binding site. Thr14, Thr15, and Ser16 together coordinate ATP. Thr14 contacts sn-glycerol 3-phosphate. Arg18 provides a ligand contact to ADP. The sn-glycerol 3-phosphate site is built by Arg84, Glu85, Tyr136, and Asp246. Positions 84, 85, 136, 246, and 247 each coordinate glycerol. Positions 268 and 311 each coordinate ADP. The ATP site is built by Thr268, Gly311, Gln315, and Gly412. Residues Gly412 and Asn416 each coordinate ADP.

It belongs to the FGGY kinase family. In terms of assembly, homotetramer and homodimer (in equilibrium). Heterodimer with EIIA-Glc. Binds 1 zinc ion per glycerol kinase EIIA-Glc dimer. The zinc ion is important for dimerization.

The catalysed reaction is glycerol + ATP = sn-glycerol 3-phosphate + ADP + H(+). It functions in the pathway polyol metabolism; glycerol degradation via glycerol kinase pathway; sn-glycerol 3-phosphate from glycerol: step 1/1. Activity of this regulatory enzyme is affected by several metabolites. Allosterically and non-competitively inhibited by fructose 1,6-bisphosphate (FBP) and unphosphorylated phosphocarrier protein EIIA-Glc (III-Glc), an integral component of the bacterial phosphotransferase (PTS) system. Its function is as follows. Key enzyme in the regulation of glycerol uptake and metabolism. Catalyzes the phosphorylation of glycerol to yield sn-glycerol 3-phosphate. This chain is Glycerol kinase, found in Klebsiella pneumoniae (strain 342).